The primary structure comprises 268 residues: Tubulin-specific chaperone C (268 aa).

The region spanning proline 98–isoleucine 255 is the C-CAP/cofactor C-like domain.

It localises to the cytoplasm. The protein resides in the cytoskeleton. In terms of biological role, tubulin-folding protein; involved in the early step of the tubulin folding pathway. The sequence is that of Tubulin-specific chaperone C (CIN2) from Saccharomyces cerevisiae (strain ATCC 204508 / S288c) (Baker's yeast).